Consider the following 105-residue polypeptide: Nitrogen fixation nifHD1 region GlnB-like protein 1 (105 aa).

It belongs to the P(II) protein family.

Could be involved in the regulation of nitrogen fixation. The sequence is that of Nitrogen fixation nifHD1 region GlnB-like protein 1 (glnBA) from Methanosarcina barkeri.